A 119-amino-acid chain; its full sequence is Autophagy-related protein 8B (119 aa).

Gly117 carries the Phosphatidylethanolamine amidated glycine lipid modification. The propeptide at Leu118–Leu119 is removed in mature form.

This sequence belongs to the ATG8 family. Interacts with ATG4. Post-translationally, the C-terminal 2 residues are removed by ATG4 to expose Gly-117 at the C-terminus. The C-terminal Gly is then amidated with phosphatidylethanolamine by an activating system similar to that for ubiquitin.

It localises to the cytoplasmic vesicle. The protein resides in the autophagosome membrane. Its subcellular location is the vacuole membrane. The protein localises to the cytoplasm. It is found in the cytoskeleton. Functionally, ubiquitin-like modifier involved in autophagosomes formation. May mediate the delivery of the autophagosomes to the vacuole via the microtubule cytoskeleton. In Oryza sativa subsp. indica (Rice), this protein is Autophagy-related protein 8B (ATG8B).